The following is a 449-amino-acid chain: POU domain, class 3, transcription factor 1 (449 aa).

Disordered stretches follow at residues 1-22 (MATTAQYLPRGPGGGAGGTGPL), 76-108 (GGGGGDWAGGPHLEHGKAGGGGTGRADDGGGGG), 132-152 (AHHLGPAMSPSPGAGGGHQPQ), 184-251 (GLHH…PSSD), and 393-449 (KRMT…GSVQ). Composition is skewed to gly residues over residues 11 to 20 (GPGGGAGGTG) and 93 to 108 (AGGGGTGRADDGGGGG). Residues 132 to 143 (AHHLGPAMSPSP) are compositionally biased toward low complexity. Over residues 188–197 (ALHEDGHEAQ) the composition is skewed to basic and acidic residues. A compositionally biased stretch (low complexity) spans 218 to 230 (AGGLHAAAAHLHP). The POU-specific domain occupies 245 to 319 (EDAPSSDDLE…LLNKWLEETD (75 aa)). A DNA-binding region (homeobox) is located at residues 337–396 (KRKKRTSIEVGVKGALESHFLKCPKPSAHEITGLADSLQLEKEVVRVWFCNRRQKEKRMT). A compositionally biased stretch (pro residues) spans 425-434 (PSAPPPPPPA).

The protein belongs to the POU transcription factor family. Class-3 subfamily.

It localises to the nucleus. In terms of biological role, transcription factor that binds to the octamer motif (5'-ATTTGCAT-3'). Acts as a transcriptional activator when binding cooperatively with SOX4, SOX11, or SOX12 to gene promoters. Acts as a transcriptional repressor of myelin-specific genes. The protein is POU domain, class 3, transcription factor 1 (Pou3f1) of Mus musculus (Mouse).